The following is a 546-amino-acid chain: MFS-type transporter GME11371 (546 aa).

A run of 7 helical transmembrane segments spans residues 39–59 (LTYL…DLTI), 77–96 (IGWY…SSWG), 107–127 (MFLL…AAPT), 137–157 (ITGI…AFAV), 167–187 (GGLA…GGVL), 195–215 (WCFY…FLFF), and 240–260 (FPGF…LLWG). N-linked (GlcNAc...) asparagine glycosylation occurs at N267. 7 consecutive transmembrane segments (helical) span residues 270–290 (DVIG…VVEW), 307–327 (VVLF…VLVY), 349–369 (LPYI…ISAT), 370–390 (GYFT…AGLI), 402–422 (WIGY…PPIL), 433–453 (VAAT…FMVS), and 509–529 (ISFA…IFMP).

This sequence belongs to the major facilitator superfamily.

Its subcellular location is the cell membrane. Its pathway is secondary metabolite biosynthesis. Its function is as follows. MFS-type transporter; part of the gene cluster that mediates the biosynthesis of dibenzodioxocinones such as pestalotiollide B, a novel class of inhibitors against cholesterol ester transfer protein (CEPT). essential for dibenzodioxocinones biosynthesis and may be involved in the secretion of the cluster products. The polypeptide is MFS-type transporter GME11371 (Pestalotiopsis microspora).